Here is a 357-residue protein sequence, read N- to C-terminus: Protein-L-isoaspartate O-methyltransferase domain-containing protein 1 (357 aa).

Gly-2 carries N-myristoyl glycine lipidation. Residue Ser-64 is part of the active site. 3 adoMet binding motif regions span residues 85-94, 160-164, and 181-191; these read LNLGSGTGYL, YDRIY, and LKVGGILVMPI. A BC-box region spans residues 240-250; it reads VRNLQDLARIY. Positions 299–331 are disordered; that stretch reads PLDSEEDEKMEEDSKEEEEKEHIEAMKREEPPQ. Over residues 301 to 317 the composition is skewed to acidic residues; it reads DSEEDEKMEEDSKEEEE. The segment covering 318 to 331 has biased composition (basic and acidic residues); sequence KEHIEAMKREEPPQ. The CUL-box stretch occupies residues 341–344; it reads LPLP.

Belongs to the methyltransferase superfamily. L-isoaspartyl/D-aspartyl protein methyltransferase family. In terms of assembly, component of the probable ECS(PCMTD1) E3 ubiquitin-protein ligase complex, at least composed of CUL5, ELOB, ELOC, RBX2 and PCMTD1. Interacts (via the BC-box) with ELOB and ELOC; the interaction is direct and stabilizes PCMTD1.

The protein localises to the cytoplasm. Its subcellular location is the membrane. In terms of biological role, substrate recognition component of an ECS (Elongin BC-CUL5-SOCS-box protein) E3 ubiquitin ligase complex which mediates the ubiquitination and subsequent proteasomal degradation of target proteins. Specifically binds to the methyltransferase cofactor S-adenosylmethionine (AdoMet) via the N-terminal AdoMet binding motif, but does not display methyltransferase activity. May provide an alternate maintenance pathway for modified proteins by acting as a damage-specific E3 ubiquitin ligase adaptor protein. This chain is Protein-L-isoaspartate O-methyltransferase domain-containing protein 1 (Pcmtd1), found in Mus musculus (Mouse).